The primary structure comprises 150 residues: Probable histone H2A.7 (150 aa).

Residues 1 to 12 (MESTGKVKKAFG) show a composition bias toward basic residues. Disordered stretches follow at residues 1-27 (MEST…SVSK) and 129-150 (KSAT…PKKA). Serine 146 is modified (phosphoserine). The short motif at 146 to 149 (SPKK) is the SPKK motif element.

Belongs to the histone H2A family. The nucleosome is a histone octamer containing two molecules each of H2A, H2B, H3 and H4 assembled in one H3-H4 heterotetramer and two H2A-H2B heterodimers. The octamer wraps approximately 147 bp of DNA. In terms of processing, not ubiquitinated. As to expression, strong expression through-out the roots and leaves. Also found in meristems and dividing cells.

It localises to the nucleus. The protein resides in the chromosome. Its function is as follows. Core component of nucleosome. Nucleosomes wrap and compact DNA into chromatin, limiting DNA accessibility to the cellular machineries which require DNA as a template. Histones thereby play a central role in transcription regulation, DNA repair, DNA replication and chromosomal stability. DNA accessibility is regulated via a complex set of post-translational modifications of histones, also called histone code, and nucleosome remodeling. The protein is Probable histone H2A.7 of Arabidopsis thaliana (Mouse-ear cress).